The sequence spans 133 residues: S-adenosylmethionine decarboxylase proenzyme (133 aa).

The Schiff-base intermediate with substrate; via pyruvic acid role is filled by S65. S65 carries the pyruvic acid (Ser); by autocatalysis modification. H70 serves as the catalytic Proton acceptor; for processing activity. C85 serves as the catalytic Proton donor; for catalytic activity.

Belongs to the prokaryotic AdoMetDC family. Type 1 subfamily. In terms of assembly, heterotetramer of two alpha and two beta chains arranged as a dimer of alpha/beta heterodimers. Pyruvate is required as a cofactor. Post-translationally, is synthesized initially as an inactive proenzyme. Formation of the active enzyme involves a self-maturation process in which the active site pyruvoyl group is generated from an internal serine residue via an autocatalytic post-translational modification. Two non-identical subunits are generated from the proenzyme in this reaction, and the pyruvate is formed at the N-terminus of the alpha chain, which is derived from the carboxyl end of the proenzyme. The post-translation cleavage follows an unusual pathway, termed non-hydrolytic serinolysis, in which the side chain hydroxyl group of the serine supplies its oxygen atom to form the C-terminus of the beta chain, while the remainder of the serine residue undergoes an oxidative deamination to produce ammonia and the pyruvoyl group blocking the N-terminus of the alpha chain.

It catalyses the reaction S-adenosyl-L-methionine + H(+) = S-adenosyl 3-(methylsulfanyl)propylamine + CO2. The protein operates within amine and polyamine biosynthesis; S-adenosylmethioninamine biosynthesis; S-adenosylmethioninamine from S-adenosyl-L-methionine: step 1/1. In terms of biological role, catalyzes the decarboxylation of S-adenosylmethionine to S-adenosylmethioninamine (dcAdoMet), the propylamine donor required for the synthesis of the polyamines spermine and spermidine from the diamine putrescine. The protein is S-adenosylmethionine decarboxylase proenzyme of Brevibacillus brevis (strain 47 / JCM 6285 / NBRC 100599).